The primary structure comprises 306 residues: Ribosomal RNA small subunit methyltransferase A (306 aa).

6 residues coordinate S-adenosyl-L-methionine: Asn-37, Val-39, Gly-64, Glu-85, Asp-115, and Asn-134.

The protein belongs to the class I-like SAM-binding methyltransferase superfamily. rRNA adenine N(6)-methyltransferase family. RsmA subfamily.

It is found in the cytoplasm. It catalyses the reaction adenosine(1518)/adenosine(1519) in 16S rRNA + 4 S-adenosyl-L-methionine = N(6)-dimethyladenosine(1518)/N(6)-dimethyladenosine(1519) in 16S rRNA + 4 S-adenosyl-L-homocysteine + 4 H(+). Functionally, specifically dimethylates two adjacent adenosines (A1518 and A1519) in the loop of a conserved hairpin near the 3'-end of 16S rRNA in the 30S particle. May play a critical role in biogenesis of 30S subunits. The sequence is that of Ribosomal RNA small subunit methyltransferase A from Mycobacterium leprae (strain Br4923).